Reading from the N-terminus, the 140-residue chain is Nucleoside diphosphate kinase (140 aa).

ATP contacts are provided by lysine 10, phenylalanine 58, arginine 86, threonine 92, arginine 103, and asparagine 113. Histidine 116 functions as the Pros-phosphohistidine intermediate in the catalytic mechanism.

This sequence belongs to the NDK family. As to quaternary structure, homohexamer. The cofactor is Mg(2+).

Its subcellular location is the cytoplasm. The catalysed reaction is a 2'-deoxyribonucleoside 5'-diphosphate + ATP = a 2'-deoxyribonucleoside 5'-triphosphate + ADP. It catalyses the reaction a ribonucleoside 5'-diphosphate + ATP = a ribonucleoside 5'-triphosphate + ADP. In terms of biological role, major role in the synthesis of nucleoside triphosphates other than ATP. The ATP gamma phosphate is transferred to the NDP beta phosphate via a ping-pong mechanism, using a phosphorylated active-site intermediate. The polypeptide is Nucleoside diphosphate kinase (Methanocaldococcus jannaschii (strain ATCC 43067 / DSM 2661 / JAL-1 / JCM 10045 / NBRC 100440) (Methanococcus jannaschii)).